The following is a 272-amino-acid chain: Phosphate import ATP-binding protein PstB (272 aa).

In terms of domain architecture, ABC transporter spans Val-18–Ser-257. Residue Gly-50–Ser-57 participates in ATP binding.

This sequence belongs to the ABC transporter superfamily. Phosphate importer (TC 3.A.1.7) family. In terms of assembly, the complex is composed of two ATP-binding proteins (PstB), two transmembrane proteins (PstC and PstA) and a solute-binding protein (PstS).

The protein localises to the cell inner membrane. It carries out the reaction phosphate(out) + ATP + H2O = ADP + 2 phosphate(in) + H(+). Functionally, part of the ABC transporter complex PstSACB involved in phosphate import. Responsible for energy coupling to the transport system. The sequence is that of Phosphate import ATP-binding protein PstB from Synechococcus sp. (strain CC9902).